Consider the following 158-residue polypeptide: Endoribonuclease YbeY (158 aa).

3 residues coordinate Zn(2+): H124, H128, and H134.

Belongs to the endoribonuclease YbeY family. Zn(2+) is required as a cofactor.

Its subcellular location is the cytoplasm. Single strand-specific metallo-endoribonuclease involved in late-stage 70S ribosome quality control and in maturation of the 3' terminus of the 16S rRNA. In Caldanaerobacter subterraneus subsp. tengcongensis (strain DSM 15242 / JCM 11007 / NBRC 100824 / MB4) (Thermoanaerobacter tengcongensis), this protein is Endoribonuclease YbeY.